Consider the following 445-residue polypeptide: tRNA modification GTPase MnmE (445 aa).

Positions 24, 81, and 121 each coordinate (6S)-5-formyl-5,6,7,8-tetrahydrofolate. The 152-residue stretch at 218–369 (GLTVVIAGPP…LLEALVGFAR (152 aa)) folds into the TrmE-type G domain. GTP is bound by residues 228–233 (NAGKST), 247–253 (SPHAGTT), 272–275 (DTAG), and 350–352 (SAR). Mg(2+)-binding residues include S232 and T253. K445 is a binding site for (6S)-5-formyl-5,6,7,8-tetrahydrofolate.

It belongs to the TRAFAC class TrmE-Era-EngA-EngB-Septin-like GTPase superfamily. TrmE GTPase family. Homodimer. Heterotetramer of two MnmE and two MnmG subunits. K(+) serves as cofactor.

It localises to the cytoplasm. Exhibits a very high intrinsic GTPase hydrolysis rate. Involved in the addition of a carboxymethylaminomethyl (cmnm) group at the wobble position (U34) of certain tRNAs, forming tRNA-cmnm(5)s(2)U34. The polypeptide is tRNA modification GTPase MnmE (Bradyrhizobium sp. (strain BTAi1 / ATCC BAA-1182)).